Consider the following 247-residue polypeptide: NH(3)-dependent NAD(+) synthetase (247 aa).

Glycine 29 to serine 36 contacts ATP. Aspartate 35 provides a ligand contact to Mg(2+). Deamido-NAD(+) is bound at residue arginine 120. Threonine 140 is a binding site for ATP. Position 145 (glutamate 145) interacts with Mg(2+). Deamido-NAD(+) is bound by residues lysine 153 and aspartate 160. Lysine 169 and serine 191 together coordinate ATP. Histidine 237–lysine 238 is a deamido-NAD(+) binding site.

It belongs to the NAD synthetase family. As to quaternary structure, homodimer.

The enzyme catalyses deamido-NAD(+) + NH4(+) + ATP = AMP + diphosphate + NAD(+) + H(+). The protein operates within cofactor biosynthesis; NAD(+) biosynthesis; NAD(+) from deamido-NAD(+) (ammonia route): step 1/1. Functionally, catalyzes the ATP-dependent amidation of deamido-NAD to form NAD. Uses ammonia as a nitrogen source. In Alkaliphilus metalliredigens (strain QYMF), this protein is NH(3)-dependent NAD(+) synthetase.